A 122-amino-acid polypeptide reads, in one-letter code: Large ribosomal subunit protein uL14 (122 aa).

It belongs to the universal ribosomal protein uL14 family. Part of the 50S ribosomal subunit. Forms a cluster with proteins L3 and L19. In the 70S ribosome, L14 and L19 interact and together make contacts with the 16S rRNA in bridges B5 and B8.

Functionally, binds to 23S rRNA. Forms part of two intersubunit bridges in the 70S ribosome. In Spiroplasma citri, this protein is Large ribosomal subunit protein uL14.